The chain runs to 391 residues: Polyketide synthase 1 (391 aa).

C164 is a catalytic residue.

The protein belongs to the thiolase-like superfamily. Chalcone/stilbene synthases family. Homodimer. In terms of tissue distribution, expressed in fruits.

It catalyses the reaction (E)-4-coumaroyl-CoA + 3 malonyl-CoA + 3 H(+) = 2',4,4',6'-tetrahydroxychalcone + 3 CO2 + 4 CoA. Its pathway is secondary metabolite biosynthesis; flavonoid biosynthesis. Its function is as follows. Polyketide synthase producing naringenin chalcone and slightly p-coumaryltriacetic acid lactone (CTAL). Can use p-coumaryl-CoA as substrate. The sequence is that of Polyketide synthase 1 (PKS1) from Rubus idaeus (Raspberry).